A 256-amino-acid chain; its full sequence is Thiazole synthase (256 aa).

Residue Lys-95 is the Schiff-base intermediate with DXP of the active site. 1-deoxy-D-xylulose 5-phosphate contacts are provided by residues Gly-156, 182–183 (AG), and 204–205 (NT).

Belongs to the ThiG family. Homotetramer. Forms heterodimers with either ThiH or ThiS.

It localises to the cytoplasm. The catalysed reaction is [ThiS sulfur-carrier protein]-C-terminal-Gly-aminoethanethioate + 2-iminoacetate + 1-deoxy-D-xylulose 5-phosphate = [ThiS sulfur-carrier protein]-C-terminal Gly-Gly + 2-[(2R,5Z)-2-carboxy-4-methylthiazol-5(2H)-ylidene]ethyl phosphate + 2 H2O + H(+). It participates in cofactor biosynthesis; thiamine diphosphate biosynthesis. Its function is as follows. Catalyzes the rearrangement of 1-deoxy-D-xylulose 5-phosphate (DXP) to produce the thiazole phosphate moiety of thiamine. Sulfur is provided by the thiocarboxylate moiety of the carrier protein ThiS. In vitro, sulfur can be provided by H(2)S. The chain is Thiazole synthase from Escherichia coli (strain 55989 / EAEC).